The sequence spans 120 residues: Large ribosomal subunit protein uL18 (120 aa).

As to quaternary structure, part of the 50S ribosomal subunit; part of the 5S rRNA/L5/L18/L25 subcomplex. Contacts the 5S and 23S rRNAs.

Functionally, this is one of the proteins that bind and probably mediate the attachment of the 5S RNA into the large ribosomal subunit, where it forms part of the central protuberance. The polypeptide is Large ribosomal subunit protein uL18 (Rhodopseudomonas palustris (strain ATCC BAA-98 / CGA009)).